The primary structure comprises 38 residues: Large ribosomal subunit protein bL36 (38 aa).

The protein belongs to the bacterial ribosomal protein bL36 family.

The sequence is that of Large ribosomal subunit protein bL36 from Prochlorococcus marinus (strain MIT 9312).